A 545-amino-acid polypeptide reads, in one-letter code: Esterase-5B (545 aa).

A signal peptide spans Met-1–Ala-19. An intrachain disulfide couples Cys-84 to Cys-103. N-linked (GlcNAc...) asparagine glycosylation occurs at Asn-113. The active-site Acyl-ester intermediate is Ser-207. Residues Cys-259 and Cys-271 are joined by a disulfide bond. An N-linked (GlcNAc...) asparagine glycan is attached at Asn-421. His-467 serves as the catalytic Charge relay system. Asn-507 carries N-linked (GlcNAc...) asparagine glycosylation. Cysteines 515 and 536 form a disulfide.

This sequence belongs to the type-B carboxylesterase/lipase family. Homodimer.

It localises to the secreted. It carries out the reaction a carboxylic ester + H2O = an alcohol + a carboxylate + H(+). In Drosophila miranda (Fruit fly), this protein is Esterase-5B (Est-5B).